The primary structure comprises 314 residues: tRNA pseudouridine synthase B (314 aa).

The active-site Nucleophile is the aspartate 54.

The protein belongs to the pseudouridine synthase TruB family. Type 1 subfamily.

The catalysed reaction is uridine(55) in tRNA = pseudouridine(55) in tRNA. Its function is as follows. Responsible for synthesis of pseudouridine from uracil-55 in the psi GC loop of transfer RNAs. The sequence is that of tRNA pseudouridine synthase B from Ralstonia nicotianae (strain ATCC BAA-1114 / GMI1000) (Ralstonia solanacearum).